Here is a 120-residue protein sequence, read N- to C-terminus: MALNIEEIIASVKEASVLELNDLVKAIEEEFGVTAAAPVAVAAAGGAAAEQTEFTVELASAGDSKIKVIKVVREITGLGLKEAKELVDNAPKALKEGVAKEEAEEIKAKLEEVGANVEVK.

Belongs to the bacterial ribosomal protein bL12 family. As to quaternary structure, homodimer. Part of the ribosomal stalk of the 50S ribosomal subunit. Forms a multimeric L10(L12)X complex, where L10 forms an elongated spine to which 2 to 4 L12 dimers bind in a sequential fashion. Binds GTP-bound translation factors.

Forms part of the ribosomal stalk which helps the ribosome interact with GTP-bound translation factors. Is thus essential for accurate translation. In Listeria monocytogenes serotype 4b (strain CLIP80459), this protein is Large ribosomal subunit protein bL12.